We begin with the raw amino-acid sequence, 442 residues long: tRNA modification GTPase MnmE (442 aa).

Residues R27, E84, and K124 each coordinate (6S)-5-formyl-5,6,7,8-tetrahydrofolate. A TrmE-type G domain is found at 221 to 366; sequence GFQIVILGAP…LMELISQASA (146 aa). GTP contacts are provided by residues 231–236, 250–256, 275–278, and 329–332; these read NAGKSS, TEEPGTT, DTAG, and NKAD. Mg(2+)-binding residues include S235 and T256. (6S)-5-formyl-5,6,7,8-tetrahydrofolate is bound at residue K442.

The protein belongs to the TRAFAC class TrmE-Era-EngA-EngB-Septin-like GTPase superfamily. TrmE GTPase family. In terms of assembly, homodimer. Heterotetramer of two MnmE and two MnmG subunits. Requires K(+) as cofactor.

The protein resides in the cytoplasm. Functionally, exhibits a very high intrinsic GTPase hydrolysis rate. Involved in the addition of a carboxymethylaminomethyl (cmnm) group at the wobble position (U34) of certain tRNAs, forming tRNA-cmnm(5)s(2)U34. In Chelativorans sp. (strain BNC1), this protein is tRNA modification GTPase MnmE.